The chain runs to 150 residues: UPF0178 protein PP_5221 (150 aa).

This sequence belongs to the UPF0178 family.

This Pseudomonas putida (strain ATCC 47054 / DSM 6125 / CFBP 8728 / NCIMB 11950 / KT2440) protein is UPF0178 protein PP_5221.